A 254-amino-acid polypeptide reads, in one-letter code: MSQLMIDAQQVCKNYGRLEVLKGIDLQVPKGTVTCLIGPSGSGKSTMLRCVNHLEKVNAGRLYVDGDLIGYRERDGVLYEISEKDAAKQRSDIGMVFQNFNLFPHRTVIENIIEAPIHVKKQPESKARARAMELLEQVGLAHKADAYPVQLSGGQQQRVAIARAVAMEPKLMLFDEPTSALDPELVGEVLRVMKQLADDGMTMLVVTHEMGFAHEVADQVVFMADGVVVEAGTPEQVLDNPKEQRTKDFLSSLL.

Residues 6 to 250 (IDAQQVCKNY…PKEQRTKDFL (245 aa)) form the ABC transporter domain. ATP is bound at residue 38 to 45 (GPSGSGKS).

The protein belongs to the ABC transporter superfamily. As to quaternary structure, the complex is probably composed of two ATP-binding proteins (ArgV), two transmembrane proteins (ArgU) and a solute-binding protein (ArgT).

The protein localises to the cell membrane. The enzyme catalyses a polar amino acid(out) + ATP + H2O = a polar amino acid(in) + ADP + phosphate + H(+). The catalysed reaction is L-arginine(out) + ATP + H2O = L-arginine(in) + ADP + phosphate + H(+). Its function is as follows. Part of the ABC transporter complex ArgTUV involved in L-arginine import. May also transport L-citrulline. Probably responsible for energy coupling to the transport system. In Corynebacterium glutamicum (strain ATCC 13032 / DSM 20300 / JCM 1318 / BCRC 11384 / CCUG 27702 / LMG 3730 / NBRC 12168 / NCIMB 10025 / NRRL B-2784 / 534), this protein is Arginine transport ATP-binding protein ArgV.